Consider the following 349-residue polypeptide: AA9 family lytic polysaccharide monooxygenase C (349 aa).

A signal peptide spans 1-19 (MKSTFGLLALAAAAKLVSA). H20 and H102 together coordinate Cu(2+). A disulfide bridge connects residues C62 and C183. Residue H169 participates in O2 binding. Y180 provides a ligand contact to Cu(2+). The interval 233–304 (DGSSSGSSGS…SGSNSGSDSC (72 aa)) is disordered. Low complexity-rich tracts occupy residues 234 to 262 (GSSS…AAPT) and 269 to 304 (TSAT…SDSC). A CBM1 domain is found at 311-347 (GSVKIYGQCGGQNYSGPTSCEAGLICKEWNPYYHQCV). 2 disulfides stabilise this stretch: C319–C336 and C330–C346. N-linked (GlcNAc...) asparagine glycosylation is present at N323.

It belongs to the polysaccharide monooxygenase AA9 family. Cu(2+) serves as cofactor.

The protein resides in the secreted. The catalysed reaction is [(1-&gt;4)-beta-D-glucosyl]n+m + reduced acceptor + O2 = 4-dehydro-beta-D-glucosyl-[(1-&gt;4)-beta-D-glucosyl]n-1 + [(1-&gt;4)-beta-D-glucosyl]m + acceptor + H2O.. Lytic polysaccharide monooxygenase (LPMO) that depolymerizes crystalline and amorphous polysaccharides via the oxidation of scissile alpha- or beta-(1-4)-glycosidic bonds, yielding C4 oxidation products. Catalysis by LPMOs requires the reduction of the active-site copper from Cu(II) to Cu(I) by a reducing agent and H(2)O(2) or O(2) as a cosubstrate. Active on cellulose and cello-oligosaccharides, as well as plant cell wall-derived hemicellulosic polysaccharides. Also active on cello-oligosaccharides such as cellohexaose, cellopentaose or cellotetraose. The chain is AA9 family lytic polysaccharide monooxygenase C from Aspergillus fumigatus (strain ATCC MYA-4609 / CBS 101355 / FGSC A1100 / Af293) (Neosartorya fumigata).